Here is a 293-residue protein sequence, read N- to C-terminus: MISGIINLKKEAGMTSHDAVFKLRKILKEKKIGHGGTLDPDVIGVLPIAVGKATRVLEYMTEAGKVYEGQITLGFSTTTEDASGELLQWTPVDETLSVELIDQAMTCFMGQITQVPPMYSAVKVNGKKLYEYARAGQEVERPQRQVRIYDFKRTSDLVFEDECCHFDFRVSCSKGTYIRTLAVDLGQKLGYASHMSFLKRTASAGLDLSQALTLAEIAEKVEEKDFSFLLPIEYGVLDLPRIDLNPKQTKEVSFGRRLKLLRQEELLAAFFENQLVAVLEKRDTSYKPKKVFL.

The active-site Nucleophile is the Asp39.

The protein belongs to the pseudouridine synthase TruB family. Type 1 subfamily.

The enzyme catalyses uridine(55) in tRNA = pseudouridine(55) in tRNA. Functionally, responsible for synthesis of pseudouridine from uracil-55 in the psi GC loop of transfer RNAs. This Streptococcus mutans serotype c (strain ATCC 700610 / UA159) protein is tRNA pseudouridine synthase B.